The primary structure comprises 392 residues: tRNA (guanine(26)-N(2)/guanine(27)-N(2))-dimethyltransferase (392 aa).

The region spanning 2–375 is the Trm1 methyltransferase domain; sequence EIVQEGIAKI…LSFEEVMKKM (374 aa). Positions 36, 66, 84, 113, and 114 each coordinate S-adenosyl-L-methionine. Zn(2+) is bound by residues Cys-247, Cys-250, Cys-266, and Cys-269.

The protein belongs to the class I-like SAM-binding methyltransferase superfamily. Trm1 family.

It carries out the reaction guanosine(26)/guanosine(27) in tRNA + 4 S-adenosyl-L-methionine = N(2)-dimethylguanosine(26)/N(2)-dimethylguanosine(27) in tRNA + 4 S-adenosyl-L-homocysteine + 4 H(+). Functionally, dimethylates the guanine residues at position 26 and 27 of one or more tRNAs using S-adenosyl-L-methionine as donor of the methyl groups. This Aquifex aeolicus (strain VF5) protein is tRNA (guanine(26)-N(2)/guanine(27)-N(2))-dimethyltransferase.